Here is a 709-residue protein sequence, read N- to C-terminus: Eukaryotic translation initiation factor 3 subunit B (709 aa).

The segment at 1–98 (MSINEEEYLR…LFIQYKNVAD (98 aa)) is sufficient for interaction with HCR1 and TIF32. A sufficient for interaction with PIC8 region spans residues 1-221 (MSINEEEYLR…GIQAWGGADF (221 aa)). Residues 37-124 (NYVIVDGAPI…HRLLVNRLSD (88 aa)) form the RRM domain.

Belongs to the eIF-3 subunit B family. In terms of assembly, component of the eukaryotic translation initiation factor 3 (eIF-3) complex.

It is found in the cytoplasm. Functionally, RNA-binding component of the eukaryotic translation initiation factor 3 (eIF-3) complex, which is involved in protein synthesis of a specialized repertoire of mRNAs and, together with other initiation factors, stimulates binding of mRNA and methionyl-tRNAi to the 40S ribosome. The eIF-3 complex specifically targets and initiates translation of a subset of mRNAs involved in cell proliferation. This Lodderomyces elongisporus (strain ATCC 11503 / CBS 2605 / JCM 1781 / NBRC 1676 / NRRL YB-4239) (Yeast) protein is Eukaryotic translation initiation factor 3 subunit B.